Reading from the N-terminus, the 919-residue chain is UPF0182 protein Tery_4385 (919 aa).

Transmembrane regions (helical) follow at residues 6 to 26 (YIII…RTLV), 52 to 72 (IFLW…NYWI), 96 to 116 (IFVK…AATA), 160 to 180 (WLFT…ALKG), 198 to 218 (THIS…FWFE), 243 to 263 (FAYW…VLSV), and 268 to 288 (IIWP…FNVL).

Belongs to the UPF0182 family.

Its subcellular location is the cell membrane. The polypeptide is UPF0182 protein Tery_4385 (Trichodesmium erythraeum (strain IMS101)).